Consider the following 948-residue polypeptide: UvrABC system protein A (948 aa).

Position 31 to 38 (31 to 38 (GLSGSGKS)) interacts with ATP. A C4-type zinc finger spans residues 249–277 (CPNGHDIGFTELSPRMFSFNSPYGACETC). 2 consecutive ABC transporter domains span residues 307 to 586 (WAGS…KNSL) and 606 to 934 (GNGS…QYLK). 638–645 (GVSGSGKS) lines the ATP pocket. The segment at 737 to 763 (CETCEGDGILKIEMHFLPDVYVTCEVC) adopts a C4-type zinc-finger fold.

This sequence belongs to the ABC transporter superfamily. UvrA family. Forms a heterotetramer with UvrB during the search for lesions.

The protein localises to the cytoplasm. Its function is as follows. The UvrABC repair system catalyzes the recognition and processing of DNA lesions. UvrA is an ATPase and a DNA-binding protein. A damage recognition complex composed of 2 UvrA and 2 UvrB subunits scans DNA for abnormalities. When the presence of a lesion has been verified by UvrB, the UvrA molecules dissociate. The chain is UvrABC system protein A from Leptospira interrogans serogroup Icterohaemorrhagiae serovar copenhageni (strain Fiocruz L1-130).